The sequence spans 155 residues: MRPVVRVIREDWADAALPLPSYETAGAAGADLRANLPPESRAEGLVLAPLGRVLVPTGLRIEIPEGFEVQIRPRSGLALKHGISLPNSPGTIDSDYRGPLGVILVNLGAEPFRVAHGDRIAQMVVAPVVQAGFELVEGLGATARGAGGFGSTGTA.

Residues 74-76 (RSG), asparagine 87, and 91-93 (TID) contribute to the substrate site.

Belongs to the dUTPase family. Requires Mg(2+) as cofactor.

It carries out the reaction dUTP + H2O = dUMP + diphosphate + H(+). The protein operates within pyrimidine metabolism; dUMP biosynthesis; dUMP from dCTP (dUTP route): step 2/2. Functionally, this enzyme is involved in nucleotide metabolism: it produces dUMP, the immediate precursor of thymidine nucleotides and it decreases the intracellular concentration of dUTP so that uracil cannot be incorporated into DNA. This chain is Deoxyuridine 5'-triphosphate nucleotidohydrolase, found in Cereibacter sphaeroides (strain KD131 / KCTC 12085) (Rhodobacter sphaeroides).